Consider the following 338-residue polypeptide: Transcription factor MYB76 (338 aa).

HTH myb-type domains follow at residues 9 to 65 (GEGL…KPDI) and 66 to 116 (KRGE…KKRL). DNA-binding regions (H-T-H motif) lie at residues 37–61 (WRDI…TNYL) and 89–112 (WSVI…NTHL). 2 disordered regions span residues 123 to 171 (PVTH…SSNL) and 176 to 195 (SKIS…CKKR). The span at 140–154 (MKFDFQKKSNQDEHS) shows a compositional bias: basic and acidic residues. A compositionally biased stretch (low complexity) spans 155–171 (SQSSSTTPASLPLSSNL).

As to quaternary structure, can form complexes with MYC2, MYC3 or MYC4. Expressed in both vegetative and generative organs. Mostly present in inflorescences, flowers and seedlings, in the transition zone between roots and the foliar part, and stems, and, to a lower extent, in leaves (in midvein and trichomes).

The protein resides in the nucleus. In terms of biological role, plays a role in determining the spatial distribution of aliphatic glucosinolates (AGLSs) within the leaf, mostly short chained. Together with MYB28/HAG1 and MYB29/HAG3, promotes aliphatic glucosinolate biosynthesis and represses indolic glucosinolate biosynthesis, but could not activate AGSL biosynthesis on its own. The protein is Transcription factor MYB76 (MYB76) of Arabidopsis thaliana (Mouse-ear cress).